We begin with the raw amino-acid sequence, 217 residues long: Dense granule protein 1 (217 aa).

The N-terminal stretch at Met-1–Ala-19 is a signal peptide. A compositionally biased stretch (polar residues) spans Val-171 to Glu-183. Residues Val-171–Glu-217 are disordered. N-linked (GlcNAc...) asparagine glycosylation occurs at Asn-191. The segment covering Glu-208 to Glu-217 has biased composition (acidic residues).

This sequence belongs to the Gra7 family.

It localises to the secreted. The chain is Dense granule protein 1 (DG1) from Neospora caninum (Coccidian parasite).